The chain runs to 115 residues: MNMLTALSVNIALSTCLIAIAFWLPQLNLYTEKANPYECGFDPMSSARLPFSMKFFLVAITFLLFDLEIALLLPLPWAIQTNNINTMMLTAFILVSVLALGLAYEWMQKGLEWTE.

3 helical membrane passes run 4-24, 55-75, and 87-107; these read LTAL…AFWL, FFLV…LLPL, and MMLT…YEWM.

Belongs to the complex I subunit 3 family. As to quaternary structure, core subunit of respiratory chain NADH dehydrogenase (Complex I) which is composed of 45 different subunits. Interacts with TMEM186. Interacts with TMEM242.

The protein resides in the mitochondrion inner membrane. It catalyses the reaction a ubiquinone + NADH + 5 H(+)(in) = a ubiquinol + NAD(+) + 4 H(+)(out). Its function is as follows. Core subunit of the mitochondrial membrane respiratory chain NADH dehydrogenase (Complex I) which catalyzes electron transfer from NADH through the respiratory chain, using ubiquinone as an electron acceptor. Essential for the catalytic activity of complex I. This is NADH-ubiquinone oxidoreductase chain 3 from Peromyscus boylii (Brush deermouse).